A 477-amino-acid polypeptide reads, in one-letter code: Proline--tRNA ligase (477 aa).

Belongs to the class-II aminoacyl-tRNA synthetase family. ProS type 3 subfamily. As to quaternary structure, homodimer.

The protein resides in the cytoplasm. It carries out the reaction tRNA(Pro) + L-proline + ATP = L-prolyl-tRNA(Pro) + AMP + diphosphate. In terms of biological role, catalyzes the attachment of proline to tRNA(Pro) in a two-step reaction: proline is first activated by ATP to form Pro-AMP and then transferred to the acceptor end of tRNA(Pro). The sequence is that of Proline--tRNA ligase from Lachnoclostridium phytofermentans (strain ATCC 700394 / DSM 18823 / ISDg) (Clostridium phytofermentans).